Reading from the N-terminus, the 112-residue chain is uncharacterized protein (112 aa).

Residues 91–112 (ENQRKKGTRKRRSSEVDSKEKS) form a disordered region. The span at 103–112 (SSEVDSKEKS) shows a compositional bias: basic and acidic residues.

This is an uncharacterized protein from Caenorhabditis elegans.